The chain runs to 163 residues: Phosphopantetheine adenylyltransferase (163 aa).

Ser8 is a substrate binding site. ATP-binding positions include 8-9 and His16; that span reads SF. The substrate site is built by Lys40, Thr72, and Arg86. ATP contacts are provided by residues 87–89, Glu97, and 122–128; these read GLR and HSFLSSS.

It belongs to the bacterial CoaD family. As to quaternary structure, homohexamer. Mg(2+) serves as cofactor.

Its subcellular location is the cytoplasm. The enzyme catalyses (R)-4'-phosphopantetheine + ATP + H(+) = 3'-dephospho-CoA + diphosphate. It participates in cofactor biosynthesis; coenzyme A biosynthesis; CoA from (R)-pantothenate: step 4/5. Functionally, reversibly transfers an adenylyl group from ATP to 4'-phosphopantetheine, yielding dephospho-CoA (dPCoA) and pyrophosphate. The protein is Phosphopantetheine adenylyltransferase of Synechococcus sp. (strain CC9902).